Consider the following 516-residue polypeptide: Na(+)/H(+) antiporter NhaB (516 aa).

The next 12 helical transmembrane spans lie at 23–43 (LALIIFLIVNPLVFAVAPFVA), 61–80 (CYPLLPGGLLAIEALLIGMT), 97–117 (LLLMFMVAGIYFMKQLLLFVF), 120–140 (LLLGIRSKMLLSLAFCLAAAF), 144–164 (FLDALTVVAVVISVAVGFYGI), 202–222 (LMMHAGVGTALGGVMTMVGEP), 238–258 (FFLRMAPVTLPVMVCGLLTCL), 303–323 (ALIGVWLIVALAFHLAEVGLI), 348–368 (TEALPFTALLTVFFSIVAVII), 391–411 (LFYLFNGLLSSISDNVFVGTV), 447–467 (ATPNGQAAFLFLLTSALAPLI), and 475–495 (VWMALPYTIVLTLVGLLCVEF).

This sequence belongs to the NhaB Na(+)/H(+) (TC 2.A.34) antiporter family.

It localises to the cell inner membrane. The catalysed reaction is 2 Na(+)(in) + 3 H(+)(out) = 2 Na(+)(out) + 3 H(+)(in). Na(+)/H(+) antiporter that extrudes sodium in exchange for external protons. The protein is Na(+)/H(+) antiporter NhaB of Klebsiella pneumoniae subsp. pneumoniae (strain ATCC 700721 / MGH 78578).